A 219-amino-acid polypeptide reads, in one-letter code: Response regulator ArlR (219 aa).

The 114-residue stretch at 3 to 116 (NILIVEDEQN…ELLARIRAVL (114 aa)) folds into the Response regulatory domain. The residue at position 52 (D52) is a 4-aspartylphosphate. A DNA-binding region (ompR/PhoB-type) is located at residues 122–219 (KDVLDINGII…TVRGVGYVIR (98 aa)).

Post-translationally, phosphorylated by ArlS.

Its subcellular location is the cytoplasm. Member of the two-component regulatory system ArlS/ArlR. The protein is Response regulator ArlR (arlR) of Staphylococcus epidermidis (strain ATCC 35984 / DSM 28319 / BCRC 17069 / CCUG 31568 / BM 3577 / RP62A).